We begin with the raw amino-acid sequence, 134 residues long: Larval cuticle protein A3A (134 aa).

The stretch at 23–26 is repeat 1; the sequence is AAPV. A disordered region spans residues 38 to 80; it reads DPHPQYSYGYDIQDGLTGDSKNQQETRDGDVVQGSYSLVDPDG. Positions 40–106 constitute a Chitin-binding type R&amp;R domain; that stretch reads HPQYSYGYDI…AVVHREPLVA (67 aa). Residues 111–114 form repeat 2; the sequence is AAPA.

Component of the cuticle of the larva of Tenebrio molitor. The protein is Larval cuticle protein A3A of Tenebrio molitor (Yellow mealworm beetle).